A 338-amino-acid polypeptide reads, in one-letter code: MTNKKRILSGVQPTGDLHIGNWLGAINNWVELQEKHETFLCVVDLHAITTEYDTKQLSKNTLSTAALYIACGINPKICSIFVQSQISAHSELCWILNCMTPINWMERMIQFKEKSIQQGNNVSIGLFDYPILMAADILLYDADYVPVGEDQKQHLELAKDIAQQRINAKFGKEENILKIPQPIIMKKGSKIMSLNDGSKKMSKSDINEGSRINLLDTPEIITKKIKRAKSDSYMGMEFNNPERPESRNLLMIYSLLSGKEVSELENDLSQTGWGTFKKIFTEQIIESLKPIQERYQVLINDPHELNKILIQGKEKAEVVANKTLSRVKSELGFFEIEK.

ATP-binding positions include 12–14 (QPT) and 20–21 (GN). The 'HIGH' region motif lies at 13 to 21 (PTGDLHIGN). An L-tryptophan-binding site is contributed by aspartate 136. ATP contacts are provided by residues 148 to 150 (GED), isoleucine 191, and 200 to 204 (KMSKS). The short motif at 200-204 (KMSKS) is the 'KMSKS' region element.

It belongs to the class-I aminoacyl-tRNA synthetase family. Homodimer.

It is found in the cytoplasm. It carries out the reaction tRNA(Trp) + L-tryptophan + ATP = L-tryptophyl-tRNA(Trp) + AMP + diphosphate + H(+). In terms of biological role, catalyzes the attachment of tryptophan to tRNA(Trp). The sequence is that of Tryptophan--tRNA ligase from Prochlorococcus marinus subsp. pastoris (strain CCMP1986 / NIES-2087 / MED4).